Here is a 461-residue protein sequence, read N- to C-terminus: Glucan endo-1,3-beta-glucosidase (461 aa).

A signal peptide spans Met-1 to Ser-23. The active-site Proton donor is Glu-123. The Nucleophile role is filled by Glu-265. The tract at residues Gly-350–Gly-375 is disordered. A compositionally biased stretch (pro residues) spans Thr-356–Ala-370. A disulfide bridge links Cys-378 with Cys-439.

It belongs to the glycosyl hydrolase 17 family. In terms of processing, contains two additional disulfide bonds.

It catalyses the reaction Hydrolysis of (1-&gt;3)-beta-D-glucosidic linkages in (1-&gt;3)-beta-D-glucans.. In terms of biological role, is thought to be an important plant defense-related product against fungal pathogens. In Triticum aestivum (Wheat), this protein is Glucan endo-1,3-beta-glucosidase (GLC1).